A 930-amino-acid polypeptide reads, in one-letter code: Zn(2)-C6 fungal-type transcription factor FTF1c (930 aa).

Residues 137 to 164 (CIPCRRKKIRCSGEKPACEHCLRSYIPC) constitute a DNA-binding region (zn(2)-C6 fungal-type).

Its subcellular location is the nucleus. In terms of biological role, zn(2)-C6 fungal-type transcription factor that has a role in the establishment of the fungus within the plant and/or the progress of the disease. Regulates the expression of virulence factors such as SIX1 and SIX6. The sequence is that of Zn(2)-C6 fungal-type transcription factor FTF1c from Fusarium oxysporum f. sp. lycopersici (strain 4287 / CBS 123668 / FGSC 9935 / NRRL 34936) (Fusarium vascular wilt of tomato).